The primary structure comprises 242 residues: Dihydropteridine reductase (242 aa).

12–36 (LVYGGRGALGSRCVQAFRARNWWVA) serves as a coordination point for NADP(+). 4 positions are modified to N6-succinyllysine: lysine 71, lysine 77, lysine 94, and lysine 100. The Proton acceptor role is filled by tyrosine 148.

This sequence belongs to the short-chain dehydrogenases/reductases (SDR) family. As to quaternary structure, homodimer.

It carries out the reaction 5,6,7,8-tetrahydropteridine + NAD(+) = 6,7-dihydropteridine + NADH + H(+). The enzyme catalyses 5,6,7,8-tetrahydropteridine + NADP(+) = 6,7-dihydropteridine + NADPH + H(+). Functionally, catalyzes the conversion of quinonoid dihydrobiopterin into tetrahydrobiopterin. The sequence is that of Dihydropteridine reductase (QDPR) from Bos taurus (Bovine).